Consider the following 246-residue polypeptide: O-antigen export system ATP-binding protein RfbB (246 aa).

In terms of domain architecture, ABC transporter spans 22–246 (SGIKDLVFHP…IIELYKQAMA (225 aa)). ATP is bound at residue 63–70 (GRNGAGKS).

Belongs to the ABC transporter superfamily.

The protein resides in the cell inner membrane. Functionally, may form an ATP-driven O-antigen export apparatus, in association with RfbA. The chain is O-antigen export system ATP-binding protein RfbB (rfbB) from Klebsiella pneumoniae.